The primary structure comprises 190 residues: dCTP deaminase, dUMP-forming (190 aa).

DCTP-binding positions include 101-106 (KSSLGR), Asp119, 127-129 (TLE), Gln148, Tyr162, and Gln174. Glu129 serves as the catalytic Proton donor/acceptor. Positions 163 to 190 (GSSQVGSKYQGQRGPTPSKSYQNFVKSN) are disordered.

It belongs to the dCTP deaminase family. In terms of assembly, homotrimer.

The catalysed reaction is dCTP + 2 H2O = dUMP + NH4(+) + diphosphate. Its pathway is pyrimidine metabolism; dUMP biosynthesis; dUMP from dCTP: step 1/1. In terms of biological role, bifunctional enzyme that catalyzes both the deamination of dCTP to dUTP and the hydrolysis of dUTP to dUMP without releasing the toxic dUTP intermediate. The chain is dCTP deaminase, dUMP-forming from Mycolicibacterium gilvum (strain PYR-GCK) (Mycobacterium gilvum (strain PYR-GCK)).